The following is a 283-amino-acid chain: Pantothenate synthetase (283 aa).

Residue Met31 to His38 participates in ATP binding. Catalysis depends on His38, which acts as the Proton donor. Gln62 provides a ligand contact to (R)-pantoate. Position 62 (Gln62) interacts with beta-alanine. Gly148–Asp151 contacts ATP. Gln154 provides a ligand contact to (R)-pantoate. Residues Val177 and Arg185 to Arg188 contribute to the ATP site.

This sequence belongs to the pantothenate synthetase family. As to quaternary structure, homodimer.

The protein resides in the cytoplasm. The catalysed reaction is (R)-pantoate + beta-alanine + ATP = (R)-pantothenate + AMP + diphosphate + H(+). The protein operates within cofactor biosynthesis; (R)-pantothenate biosynthesis; (R)-pantothenate from (R)-pantoate and beta-alanine: step 1/1. Functionally, catalyzes the condensation of pantoate with beta-alanine in an ATP-dependent reaction via a pantoyl-adenylate intermediate. The chain is Pantothenate synthetase from Staphylococcus haemolyticus (strain JCSC1435).